The chain runs to 888 residues: DNA mismatch repair protein MutS (888 aa).

The disordered stretch occupies residues 249 to 271 (IGQRPPLSPPSREASGSTMAIDP). 638–645 (GPNMAGKS) is an ATP binding site.

This sequence belongs to the DNA mismatch repair MutS family.

Its function is as follows. This protein is involved in the repair of mismatches in DNA. It is possible that it carries out the mismatch recognition step. This protein has a weak ATPase activity. The polypeptide is DNA mismatch repair protein MutS (Nitrobacter winogradskyi (strain ATCC 25391 / DSM 10237 / CIP 104748 / NCIMB 11846 / Nb-255)).